The chain runs to 172 residues: C-phycocyanin beta chain (172 aa).

Asparagine 72 bears the N4-methylasparagine mark. (2R,3E)-phycocyanobilin-binding residues include cysteine 82 and cysteine 153.

Belongs to the phycobiliprotein family. Heterodimer of an alpha and a beta subunit, which further assembles into trimers and the trimers into hexamers. The basic functional unit of phycobiliproteins is a ring-shaped hexamer formed from two back-to-back trimers contacting via the alpha chain subunits. The trimers are composed of alpha/beta subunit heterodimers arranged around a three-fold axis of symmetry. The phycoerythrins also contain a gamma subunit which is located in the center of the hexamer. In terms of processing, contains two covalently linked bilin chromophores.

The protein resides in the plastid. The protein localises to the chloroplast thylakoid membrane. Light-harvesting photosynthetic bile pigment-protein from the phycobiliprotein complex (phycobilisome, PBS). Phycocyanin is the major phycobiliprotein in the PBS rod. In Porphyra purpurea (Red seaweed), this protein is C-phycocyanin beta chain (cpcB).